The chain runs to 428 residues: Phosphoribosylamine--glycine ligase (428 aa).

Residues Lys-109–Asp-316 enclose the ATP-grasp domain. Residue Leu-135–Ser-196 participates in ATP binding. A disordered region spans residues Ser-211 to Pro-235. The span at Gln-213–Arg-223 shows a compositional bias: basic and acidic residues. Mg(2+)-binding residues include Glu-286 and Asn-288.

It belongs to the GARS family. It depends on Mg(2+) as a cofactor. The cofactor is Mn(2+).

It carries out the reaction 5-phospho-beta-D-ribosylamine + glycine + ATP = N(1)-(5-phospho-beta-D-ribosyl)glycinamide + ADP + phosphate + H(+). It participates in purine metabolism; IMP biosynthesis via de novo pathway; N(1)-(5-phospho-D-ribosyl)glycinamide from 5-phospho-alpha-D-ribose 1-diphosphate: step 2/2. The protein is Phosphoribosylamine--glycine ligase (purD) of Allochromatium vinosum (strain ATCC 17899 / DSM 180 / NBRC 103801 / NCIMB 10441 / D) (Chromatium vinosum).